The sequence spans 454 residues: Probable 1,4-beta-D-glucan cellobiohydrolase C (454 aa).

An N-terminal signal peptide occupies residues 1–19 (MKHLASSIALTLLLPAVQA). Residues 20-55 (QQTVWGQCGGQGWSGPTSCVAGAACSTLNPYYAQCI) form the CBM1 domain. 2 disulfide bridges follow: cysteine 27/cysteine 44 and cysteine 38/cysteine 54. Thr-rich linker regions lie at residues 59–94 (TATSTTLTTTTAATTTSQTTTKPTTTGPTTSAPTVT) and 95–454 (ASGN…NPSF). Residues 68–95 (TTAATTTSQTTTKPTTTGPTTSAPTVTA) form a disordered region. Aspartate 184 is a catalytic residue. 2 disulfide bridges follow: cysteine 185-cysteine 244 and cysteine 376-cysteine 423. Residue aspartate 230 is the Proton donor of the active site. Aspartate 409 (nucleophile) is an active-site residue. An N-linked (GlcNAc...) asparagine glycan is attached at asparagine 413.

The protein belongs to the glycosyl hydrolase 6 (cellulase B) family.

The protein localises to the secreted. It carries out the reaction Hydrolysis of (1-&gt;4)-beta-D-glucosidic linkages in cellulose and cellotetraose, releasing cellobiose from the non-reducing ends of the chains.. In terms of biological role, the biological conversion of cellulose to glucose generally requires three types of hydrolytic enzymes: (1) Endoglucanases which cut internal beta-1,4-glucosidic bonds; (2) Exocellobiohydrolases that cut the disaccharide cellobiose from the non-reducing end of the cellulose polymer chain; (3) Beta-1,4-glucosidases which hydrolyze the cellobiose and other short cello-oligosaccharides to glucose. This chain is Probable 1,4-beta-D-glucan cellobiohydrolase C (cbhC), found in Aspergillus fumigatus (strain CBS 144.89 / FGSC A1163 / CEA10) (Neosartorya fumigata).